Consider the following 328-residue polypeptide: Src kinase-associated phosphoprotein 2 (328 aa).

Residues 103 to 206 (EYLRAGYLEK…WVNIIMNSRG (104 aa)) form the PH domain. The disordered stretch occupies residues 231–262 (IYEELPEESEKPVTEIETPKATPVPVNNTSGK). A compositionally biased stretch (basic and acidic residues) spans 238-248 (ESEKPVTEIET). One can recognise an SH3 domain in the interval 266–327 (DYANFYRGLW…PKAYIMEMYD (62 aa)).

Belongs to the SKAP family. In terms of processing, phosphorylated on tyrosines.

The protein resides in the cytoplasm. In terms of biological role, may be involved in B-cell and macrophage adhesion processes. May play a role in src signaling pathway. This Xenopus tropicalis (Western clawed frog) protein is Src kinase-associated phosphoprotein 2 (skap2).